Here is a 307-residue protein sequence, read N- to C-terminus: Ribosomal RNA large subunit methyltransferase F (307 aa).

This sequence belongs to the methyltransferase superfamily. METTL16/RlmF family.

The protein localises to the cytoplasm. It catalyses the reaction adenosine(1618) in 23S rRNA + S-adenosyl-L-methionine = N(6)-methyladenosine(1618) in 23S rRNA + S-adenosyl-L-homocysteine + H(+). Specifically methylates the adenine in position 1618 of 23S rRNA. This Bacteroides thetaiotaomicron (strain ATCC 29148 / DSM 2079 / JCM 5827 / CCUG 10774 / NCTC 10582 / VPI-5482 / E50) protein is Ribosomal RNA large subunit methyltransferase F.